The primary structure comprises 578 residues: Probable arginine--tRNA ligase, mitochondrial (578 aa).

The transit peptide at 1–16 (MACGFRRSIACQLSRV) directs the protein to the mitochondrion. Residues 133–135 (SPN), His-144, Tyr-322, Asp-326, and Gln-350 each bind L-arginine. A 'HIGH' region motif is present at residues 133–144 (SPNIAKKFHVGH). Lys-568 is subject to N6-acetyllysine.

Belongs to the class-I aminoacyl-tRNA synthetase family.

Its subcellular location is the mitochondrion membrane. The catalysed reaction is tRNA(Arg) + L-arginine + ATP = L-arginyl-tRNA(Arg) + AMP + diphosphate. Functionally, catalyzes the attachment of arginine to tRNA(Arg) in a two-step reaction: arginine is first activated by ATP to form Arg-AMP and then transferred to the acceptor end of tRNA(Arg). The sequence is that of Probable arginine--tRNA ligase, mitochondrial (Rars2) from Mus musculus (Mouse).